A 505-amino-acid chain; its full sequence is MSVQVAAPGSTGLGPERLNPEELVRQTRQVVQGLEALRAEHHSLAGHLAEALAGPGPVAGVELLEEKQQVVNHSLEAIELGLGEAQVLLALSAHVGVLEAEKQRLRAQARRLAQENTWLREELEETQRRLRASEEAVAQLEEEKSHLQFLGQLRQYDPPEESQRPDSPPRRDSLASLFPSEEEEKKGPEAAGAAAAQQGGYEIPARLRTLHNLVIQYASQGRYEVAVPLCRQALEDLERSSGHCHPDVATMLNILALVYRDQNKYKEATELLHDALQIREQTLGPEHPAVAATLNNLAVLYGKRGRYREAEPLCQRALEIREKVLGADHPDVAKQLNNLALLCQNQGKFQDVERHYARALSIYEALGGPQDPNVAKTKNNLASAYLKQNKYQQAEELYKEILSQEALPAPLGAPQGGTAGEAQQQVLRRSSSFSKLRESIRRGSEKLVSRLRGESMAGAAGMKRAMSLNMLNVDGPRAARMQLSTQHLNEASRTLSASTQDLSPR.

The interval 1 to 20 (MSVQVAAPGSTGLGPERLNP) is disordered. The stretch at 90-150 (ALSAHVGVLE…EEEKSHLQFL (61 aa)) forms a coiled coil. The disordered stretch occupies residues 154-197 (RQYDPPEESQRPDSPPRRDSLASLFPSEEEEKKGPEAAGAAAAQ). Residues 161-173 (ESQRPDSPPRRDS) are compositionally biased toward basic and acidic residues. S173 carries the post-translational modification Phosphoserine. TPR repeat units follow at residues 207–240 (LRTL…LERS), 249–282 (ATML…REQT), 291–324 (AATL…REKV), 333–366 (AKQL…YEAL), and 375–408 (AKTK…EALP). A disordered region spans residues 409 to 439 (APLGAPQGGTAGEAQQQVLRRSSSFSKLRES). The segment covering 421–434 (EAQQQVLRRSSSFS) has biased composition (polar residues). S467 carries the phosphoserine modification. The interval 486–505 (QHLNEASRTLSASTQDLSPR) is disordered. T499 carries the phosphothreonine modification. Residue S503 is modified to Phosphoserine.

Belongs to the kinesin light chain family. As to quaternary structure, oligomer composed of two heavy chains and two light chains. Associates with microtubulin in an ATP-dependent manner. Interacts with KIF5C. Interacts with ODF1. Interacts with LRGUK. Interacts with VDAC2. As to expression, expressed in postmeiotic male germ cells (at protein level).

It localises to the cytoplasm. The protein localises to the cytoskeleton. The protein resides in the mitochondrion. In terms of biological role, kinesin is a microtubule-associated force-producing protein that may play a role in organelle transport. Plays a role during spermiogenesis in the development of the sperm tail midpiece and in the normal function of spermatozoa. May play a role in the formation of the mitochondrial sheath formation in the developing spermatid midpiece. This chain is Kinesin light chain 3 (Klc3), found in Rattus norvegicus (Rat).